A 424-amino-acid chain; its full sequence is Testican-2 (424 aa).

An N-terminal signal peptide occupies residues 1-22 (MRAPGCGRLVLPLLLLAAAALA). Residue S72 is modified to Phosphoserine; by FAM20C. 5 disulfides stabilise this stretch: C90-C101, C95-C111, C136-C166, C139-C159, and C148-C180. Residues 130–182 (GNKDSICKPCHMAQLASVCGSDGHTYSSVCKLEQQACLSSKQLAVRCEGPCPC) form the Kazal-like domain. N-linked (GlcNAc...) asparagine glycosylation is present at N225. A Thyroglobulin type-1 domain is found at 310–376 (KPPCLAELER…GTRTHGSPDC (67 aa)). Cystine bridges form between C313/C337, C348/C355, and C357/C376. O-linked (Xyl...) (glycosaminoglycan) serine glycosylation is found at S383 and S388. The segment at 387–424 (GSGVGWEDEEEKETEEAGEEAEEEEGEAGEADDGGYIW) is disordered. The span at 392–424 (WEDEEEKETEEAGEEAEEEEGEAGEADDGGYIW) shows a compositional bias: acidic residues.

Contains chondroitin sulfate and heparan sulfate O-linked oligosaccharides. Highly expressed in brain. Also found in lung and testis.

The protein resides in the secreted. It is found in the extracellular space. It localises to the extracellular matrix. Functionally, may participate in diverse steps of neurogenesis. Binds calcium. The chain is Testican-2 (SPOCK2) from Homo sapiens (Human).